The following is a 197-amino-acid chain: DnaJ homolog subfamily C member 5 (197 aa).

The region spanning 13 to 82 (GESLYHVLGL…RNIYDKYGSL (70 aa)) is the J domain. Residues 153 to 197 (EDLEAQMQSDERDTEGPVLVQPASATETTQLTSDSHASYHTDGFN) form a disordered region. The span at 175–197 (ASATETTQLTSDSHASYHTDGFN) shows a compositional bias: polar residues.

Post-translationally, palmitoylated. Palmitoylation occurs probably in the cysteine-rich domain and regulates DNAJC5 stable membrane attachment.

It is found in the cytoplasm. The protein localises to the cytosol. Its subcellular location is the membrane. The protein resides in the cytoplasmic vesicle. It localises to the secretory vesicle. It is found in the chromaffin granule membrane. The protein localises to the melanosome. Its subcellular location is the cell membrane. Functionally, may have an important role in presynaptic function. May be involved in calcium-dependent neurotransmitter release at nerve endings. The polypeptide is DnaJ homolog subfamily C member 5 (Xenopus laevis (African clawed frog)).